The primary structure comprises 248 residues: MSPFLSLPLLLLSVLSASYSETVTSEDAQKTCPTVIACSSPGINGFPGKDGRDGTKGEKGEPGQGLRGLQGPPGKLGPPGNPGPSGSPGAKGQKGDPGASPDGDSSLAASERKALQTEMARIKKWVTFSLGKQVGKKLFLSNGETMTFDKVKALCAQFQASVATPMNQAENTVIQNLVKEEAFLGITDEETEGQFVDLTGRRLTYTNWNQGEPNNADSREDCVVLLRSGGWNDVPCSSSHLAICEFPV.

Positions 1 to 20 (MSPFLSLPLLLLSVLSASYS) are cleaved as a signal peptide. Residues 36–112 (IACSSPGING…GDSSLAASER (77 aa)) form a disordered region. The 58-residue stretch at 42–99 (GINGFPGKDGRDGTKGEKGEPGQGLRGLQGPPGKLGPPGNPGPSGSPGAKGQKGDPGA) folds into the Collagen-like domain. A 4-hydroxyproline modification is found at P47. Residues 49 to 61 (KDGRDGTKGEKGE) show a composition bias toward basic and acidic residues. 4-hydroxyproline is present on residues P73, P79, P82, and P88. Residues 112 to 130 (RKALQTEMARIKKWVTFSL) are a coiled coil. In terms of domain architecture, C-type lectin spans 134-245 (VGKKLFLSNG…CSSSHLAICE (112 aa)). 2 cysteine pairs are disulfide-bonded: C155–C244 and C222–C236.

In terms of assembly, oligomeric complex of 3 or more homotrimers. Interacts with MASP1 and MASP2. Interacts with MEP1A and MEP1B and may inhibit their catalytic activity. Post-translationally, hydroxylation on proline residues within the sequence motif, GXPG, is most likely to be 4-hydroxy as this fits the requirement for 4-hydroxylation in vertebrates.

Its subcellular location is the secreted. Functionally, calcium-dependent lectin involved in innate immune defense. Binds mannose, fucose and N-acetylglucosamine on different microorganisms and activates the lectin complement pathway. Binds to late apoptotic cells, as well as to apoptotic blebs and to necrotic cells, but not to early apoptotic cells, facilitating their uptake by macrophages. This is Mannose-binding protein C (MBL2) from Saguinus oedipus (Cotton-top tamarin).